Here is a 223-residue protein sequence, read N- to C-terminus: Cytotoxic T-lymphocyte protein 4 (223 aa).

The N-terminal stretch at 1-35 (MACLGFQRHKAQLNLATRTWPCTLLFFLLFIPVFC) is a signal peptide. The Extracellular segment spans residues 36-161 (KAMHVAQPAV…IDPEPCPDSD (126 aa)). The Ig-like V-type domain maps to 39–140 (HVAQPAVVLA…VELMYPPPYY (102 aa)). Positions 46–50 (VLASS) are homodimerization. 2 cysteine pairs are disulfide-bonded: Cys-58-Cys-129 and Cys-85-Cys-103. A glycan (N-linked (GlcNAc...) asparagine) is linked at Asn-113. The important for interaction with CD80 and CD86 stretch occupies residues 134-139 (MYPPPY). Residue Asn-145 is glycosylated (N-linked (GlcNAc...) asparagine). The tract at residues 150–155 (YVIDPE) is homodimerization. A helical transmembrane segment spans residues 162 to 182 (FLLWILAAVSSGLFFYSFLLT). Topologically, residues 183–223 (AVSLSKMLKKRSPLTTGVYVKMPPTEPECEKQFQPYFIPIN) are cytoplasmic. Tyr-201 carries the post-translational modification Phosphotyrosine; by TXK and JAK2.

In terms of assembly, homodimer; disulfide-linked. Binds to CD80/B7-1 and CD86/B7.2. Interacts with ICOSLG. In terms of processing, N-glycosylation is important for dimerization. Post-translationally, phosphorylation at Tyr-201 prevents binding to the AP-2 adapter complex, blocks endocytosis, and leads to retention of CTLA4 on the cell surface. Widely expressed with highest levels in lymphoid tissues. Detected in activated T-cells where expression levels are 30- to 50-fold less than CD28, the stimulatory coreceptor, on the cell surface following activation.

Its subcellular location is the cell membrane. Inhibitory receptor acting as a major negative regulator of T-cell responses. The affinity of CTLA4 for its natural B7 family ligands, CD80 and CD86, is considerably stronger than the affinity of their cognate stimulatory coreceptor CD28. This chain is Cytotoxic T-lymphocyte protein 4 (CTLA4), found in Homo sapiens (Human).